The chain runs to 289 residues: Inorganic pyrophosphatase (289 aa).

An N-acetylserine modification is found at Ser2. N6-acetyllysine is present on Lys57. Asp116, Asp121, and Asp153 together coordinate Mg(2+). Position 228 is an N6-acetyllysine (Lys228). Phosphoserine is present on Ser250.

Belongs to the PPase family. Homodimer. Mg(2+) serves as cofactor.

It is found in the cytoplasm. The catalysed reaction is diphosphate + H2O = 2 phosphate + H(+). This Pongo abelii (Sumatran orangutan) protein is Inorganic pyrophosphatase (PPA1).